The primary structure comprises 360 residues: MRKEWLWVGIASVLLSACIDQPPAPQQQVQQTYSGPVEEIGGAEPRYEPFNPNVNQDYKVNGQSYRIIKDPQNFSQIGLASSYGEEARGNTTATGEIFDPNALTAAHPTLPIPSYVRVTNVSNGRQIVVRVNDRGPYTPGRVIDLSRAAADRLNISNNTKVKIDFINVAPDGSLSGPGMVGTTIAKQSYALPSRPDLTSSGMGTPMQQDAPATGAAVQAIDNSQLSGTDATQPVASQSSGFLRAPTPVPAGVLESSEPVIDSAPVTPPVVANPGPVTTTPTSSAISGGYVVQVGALSDAQRAQSWQQSLSQRFGVPGKVSNSGSIYRVQLGPFSHRQQAVDLQQRLSNEAQQQSFIVAAP.

The first 17 residues, 1–17 (MRKEWLWVGIASVLLSA), serve as a signal peptide directing secretion. Cys-18 carries the N-palmitoyl cysteine lipid modification. A lipid anchor (S-diacylglycerol cysteine) is attached at Cys-18. The 77-residue stretch at 283–359 (SAISGGYVVQ…AQQQSFIVAA (77 aa)) folds into the SPOR domain.

Belongs to the RlpA family.

It is found in the cell membrane. In terms of biological role, lytic transglycosylase with a strong preference for naked glycan strands that lack stem peptides. This is Endolytic peptidoglycan transglycosylase RlpA from Yersinia pestis.